A 202-amino-acid polypeptide reads, in one-letter code: LexA repressor (202 aa).

The segment at residues 28-48 is a DNA-binding region (H-T-H motif); the sequence is RAEIAQRLGFRSPNAAEEHLK. Catalysis depends on for autocatalytic cleavage activity residues S119 and K156.

Belongs to the peptidase S24 family. As to quaternary structure, homodimer.

It catalyses the reaction Hydrolysis of Ala-|-Gly bond in repressor LexA.. In terms of biological role, represses a number of genes involved in the response to DNA damage (SOS response), including recA and lexA. Binds to the 16 bp palindromic sequence 5'-CTGTATATATATACAG-3'. In the presence of single-stranded DNA, RecA interacts with LexA causing an autocatalytic cleavage which disrupts the DNA-binding part of LexA, leading to derepression of the SOS regulon and eventually DNA repair. This is LexA repressor from Klebsiella pneumoniae (strain 342).